Here is a 396-residue protein sequence, read N- to C-terminus: Gap junction gamma-1 protein (396 aa).

The Cytoplasmic portion of the chain corresponds to 1-22 (MSWSFLTRLLEEIHNHSTFVGK). The chain crosses the membrane as a helical span at residues 23 to 45 (IWLTVLIVFRIVLTAVGGESIYY). Topologically, residues 46–75 (DEQSKFVCNTEQPGCENVCYDAFAPLSHVR) are extracellular. The chain crosses the membrane as a helical span at residues 76–95 (FWVFQIILVATPSVMYLGYA). The Cytoplasmic portion of the chain corresponds to 96–175 (IHKIAKMEHG…RRIREDGLMK (80 aa)). The interval 146 to 165 (LESEKENKDQNQSKPKHDGR) is disordered. Over residues 147 to 156 (ESEKENKDQN) the composition is skewed to basic and acidic residues. A helical transmembrane segment spans residues 176 to 198 (IYVLQLLARTVFEVGFLVGQYFL). The Extracellular segment spans residues 199–228 (YGFQVHPFYVCSRLPCPHKIDCFISRPTEK). The helical transmembrane segment at 229–248 (TIFLLIMYGVTGLCLLLNIW) threads the bilayer. The Cytoplasmic portion of the chain corresponds to 249-396 (EMLHLGFGTI…SGDGKTSVWI (148 aa)). The tract at residues 356–396 (YNHQNNPHGSREKKAKVGSKAGSNKSSASSKSGDGKTSVWI) is disordered. The segment covering 373–396 (GSKAGSNKSSASSKSGDGKTSVWI) has biased composition (low complexity).

It belongs to the connexin family. Gamma-type subfamily. In terms of assembly, a connexon is composed of a hexamer of connexins. Interacts with CNST.

It localises to the cell membrane. It is found in the cell junction. The protein resides in the gap junction. In terms of biological role, one gap junction consists of a cluster of closely packed pairs of transmembrane channels, the connexons, through which materials of low MW diffuse from one cell to a neighboring cell. The polypeptide is Gap junction gamma-1 protein (GJC1) (Bos taurus (Bovine)).